The sequence spans 381 residues: 2-methylcitrate synthase 1 (381 aa).

H192 contributes to the substrate binding site. Residue H227 is part of the active site. 260–264 lines the CoA pocket; it reads RIMGF. The active site involves H266. Position 275 (R275) interacts with substrate. The active site involves D317. Substrate contacts are provided by R342 and R361.

It belongs to the citrate synthase family. Homodimer.

The enzyme catalyses propanoyl-CoA + oxaloacetate + H2O = (2S,3S)-2-methylcitrate + CoA + H(+). The catalysed reaction is oxaloacetate + acetyl-CoA + H2O = citrate + CoA + H(+). Its pathway is carbohydrate metabolism; tricarboxylic acid cycle. Its function is as follows. Catalyzes the Claisen condensation of propionyl-CoA and oxaloacetate (OAA) to yield 2-methylcitrate (2-MC) and CoA. Also catalyzes the condensation of oxaloacetate with propionyl-CoA but with a lower specificity. The protein is 2-methylcitrate synthase 1 (prpC1) of Corynebacterium glutamicum (strain ATCC 13032 / DSM 20300 / JCM 1318 / BCRC 11384 / CCUG 27702 / LMG 3730 / NBRC 12168 / NCIMB 10025 / NRRL B-2784 / 534).